We begin with the raw amino-acid sequence, 585 residues long: Glucose oxidase-like protein fsoC (585 aa).

A104 is a binding site for FAD. Residue H521 is the Proton donor of the active site. Residue H564 is the Proton acceptor of the active site.

It belongs to the GMC oxidoreductase family. Monomer. FAD serves as cofactor.

Glucose oxidase-like protein; part of the gene cluster that mediates the biosynthesis of the enfumafungin-type antibiotic fuscoatroside. Four enzymes are sufficient to produce fuscoatroside: the terpene cyclase-glycosyl transferase fusion protein fsoAthe cytochrome P450 monoxygenases fsoD and fsoE, and the acetyltransferase fsoF; the cytochrome P450 monooxygenase fsoB and the glucose oxidase-like protein fsoC do not seem to play a role in biosynthesis of fuscoatroside. Functionally, glucose oxidase; part of the gene cluster that mediates the biosynthesis of the enfumafungin-type antibiotic, fuscoatroside. In Humicola fuscoatra, this protein is Glucose oxidase-like protein fsoC.